The chain runs to 156 residues: Regulatory protein RecX (156 aa).

This sequence belongs to the RecX family.

It localises to the cytoplasm. Functionally, modulates RecA activity. In Pseudomonas putida (strain W619), this protein is Regulatory protein RecX.